A 273-amino-acid chain; its full sequence is Tyrosinase (273 aa).

Positions 38, 54, 63, 190, 194, and 216 each coordinate Cu cation.

It belongs to the tyrosinase family. It depends on Cu(2+) as a cofactor.

The enzyme catalyses 2 L-dopa + O2 = 2 L-dopaquinone + 2 H2O. The catalysed reaction is L-tyrosine + O2 = L-dopaquinone + H2O. This is a copper-containing oxidase that functions in the formation of pigments such as melanins and other polyphenolic compounds. This chain is Tyrosinase (melC2), found in Streptomyces antibioticus.